A 1106-amino-acid polypeptide reads, in one-letter code: Zinc finger protein GLI1 (1106 aa).

The SNAG domain stretch occupies residues 1–20 (MFNSMTPPPISSYGEPCCLR). Residues 120–124 (SYGHL) form an interaction with SUFU region. 5 C2H2-type zinc fingers span residues 235 to 260 (TDCRWDGCSQEFDSQEQLVHHINSEH), 268 to 295 (FVCHWGGCSRELRPFKAQYMLVVHMRRH), 301 to 325 (HKCTFEGCRKSYSRLENLKTHLRSH), 331 to 356 (YMCEHEGCSKAFSNASDRAKHQNRTH), and 362 to 387 (YVCKLPGCTKRYTDPSSLRKHVKTVH). The tract at residues 283-291 (KAQYMLVVH) is interaction with DNA. 2 interaction with DNA regions span residues 345 to 350 (ASDRAK) and 375 to 381 (DPSSLRK). Disordered stretches follow at residues 375-485 (DPSS…DEGP), 516-580 (GLKL…SLPG), 732-792 (YGGP…LYPG), 817-889 (EQGC…PTHS), and 914-942 (GREDAPAQEPSYQSPKFLGGSQVSPSRAK). Positions 413–428 (EPKREREGGPIREESR) are enriched in basic and acidic residues. The span at 442 to 463 (PGAQSSCSSDHSPAGSAANTDS) shows a compositional bias: polar residues. The residue at position 518 (lysine 518) is an N6-acetyllysine. Low complexity-rich tracts occupy residues 544–560 (SSSSSISSAYTVSRRSS) and 737–753 (GAAAEPYGARGPGSLPL). The segment covering 754–766 (GPGPPTNYGPNPC) has biased composition (pro residues). Polar residues predominate over residues 768–779 (QQASYPDPTQET). Lysine 1003 is covalently cross-linked (Glycyl lysine isopeptide (Lys-Gly) (interchain with G-Cter in SUMO2)). The interval 1054-1087 (DEPQGLSPPPSHDQRGSSGHTPPPSGPPNMAVGN) is disordered.

The protein belongs to the GLI C2H2-type zinc-finger protein family. As to quaternary structure, interacts with KIF7. Interacts with STK36. Interacts with ZIC1; the interaction enhances transcription activation. Interacts with SUFU; this inhibits transcriptional activation by GLI1. Post-translationally, phosphorylated in vitro by ULK3. In terms of processing, acetylation at Lys-518 down-regulates transcriptional activity. Deacetylated by HDAC1. Ubiquitinated by the CRL2(FEM1B) complex, suppressing GLI1 transcriptional activator activity. In terms of tissue distribution, detected in testis (at protein level). Testis, myometrium and fallopian tube. Also expressed in the brain with highest expression in the cerebellum, optic nerve and olfactory tract. Isoform 1 is detected in brain, spleen, pancreas, liver, kidney and placenta; isoform 2 is not detectable in these tissues.

Its subcellular location is the cytoplasm. It is found in the nucleus. Functionally, acts as a transcriptional activator. Binds to the DNA consensus sequence 5'-GACCACCCA-3'. Regulates the transcription of specific genes during normal development. Plays a role in craniofacial development and digital development, as well as development of the central nervous system and gastrointestinal tract. Mediates SHH signaling. Plays a role in cell proliferation and differentiation via its role in SHH signaling. Its function is as follows. Acts as a transcriptional activator, but activates a different set of genes than isoform 1. Activates expression of CD24, unlike isoform 1. Mediates SHH signaling. Promotes cancer cell migration. The chain is Zinc finger protein GLI1 (GLI1) from Homo sapiens (Human).